Consider the following 431-residue polypeptide: Glutamate-1-semialdehyde 2,1-aminomutase 1 (431 aa).

Position 268 is an N6-(pyridoxal phosphate)lysine (Lys-268).

Belongs to the class-III pyridoxal-phosphate-dependent aminotransferase family. HemL subfamily. In terms of assembly, homodimer. Pyridoxal 5'-phosphate is required as a cofactor.

It localises to the cytoplasm. The enzyme catalyses (S)-4-amino-5-oxopentanoate = 5-aminolevulinate. The protein operates within porphyrin-containing compound metabolism; protoporphyrin-IX biosynthesis; 5-aminolevulinate from L-glutamyl-tRNA(Glu): step 2/2. This Bacillus pumilus (strain SAFR-032) protein is Glutamate-1-semialdehyde 2,1-aminomutase 1.